The primary structure comprises 106 residues: Phosphoribosyl-ATP pyrophosphatase (106 aa).

Belongs to the PRA-PH family.

Its subcellular location is the cytoplasm. It catalyses the reaction 1-(5-phospho-beta-D-ribosyl)-ATP + H2O = 1-(5-phospho-beta-D-ribosyl)-5'-AMP + diphosphate + H(+). It participates in amino-acid biosynthesis; L-histidine biosynthesis; L-histidine from 5-phospho-alpha-D-ribose 1-diphosphate: step 2/9. The protein is Phosphoribosyl-ATP pyrophosphatase of Methylobacillus flagellatus (strain ATCC 51484 / DSM 6875 / VKM B-1610 / KT).